A 152-amino-acid chain; its full sequence is NAD(P)H-quinone oxidoreductase subunit N (152 aa).

It belongs to the complex I NdhN subunit family. As to quaternary structure, NDH-1 can be composed of about 15 different subunits; different subcomplexes with different compositions have been identified which probably have different functions.

It is found in the cellular thylakoid membrane. The enzyme catalyses a plastoquinone + NADH + (n+1) H(+)(in) = a plastoquinol + NAD(+) + n H(+)(out). It catalyses the reaction a plastoquinone + NADPH + (n+1) H(+)(in) = a plastoquinol + NADP(+) + n H(+)(out). In terms of biological role, NDH-1 shuttles electrons from an unknown electron donor, via FMN and iron-sulfur (Fe-S) centers, to quinones in the respiratory and/or the photosynthetic chain. The immediate electron acceptor for the enzyme in this species is believed to be plastoquinone. Couples the redox reaction to proton translocation, and thus conserves the redox energy in a proton gradient. Cyanobacterial NDH-1 also plays a role in inorganic carbon-concentration. The polypeptide is NAD(P)H-quinone oxidoreductase subunit N (Prochlorococcus marinus (strain SARG / CCMP1375 / SS120)).